We begin with the raw amino-acid sequence, 445 residues long: Chromosomal replication initiator protein DnaA (445 aa).

The tract at residues 1–71 (MEEVWLQAQS…SVQSLTDSQT (71 aa)) is domain I, interacts with DnaA modulators. The domain II stretch occupies residues 71 to 108 (TKIELLIAKPKTEKPKQPAASEVTAAEPEACSGPDHST). Residues 83-106 (EKPKQPAASEVTAAEPEACSGPDH) are disordered. Residues 109–325 (NLNPKYTFDT…GMLIRLGAVS (217 aa)) are domain III, AAA+ region. ATP-binding residues include Gly153, Gly155, Lys156, and Thr157. A domain IV, binds dsDNA region spans residues 326–445 (SLTGKNITLD…VDTLRKGLLS (120 aa)).

The protein belongs to the DnaA family. As to quaternary structure, oligomerizes as a right-handed, spiral filament on DNA at oriC.

The protein localises to the cytoplasm. Plays an essential role in the initiation and regulation of chromosomal replication. ATP-DnaA binds to the origin of replication (oriC) to initiate formation of the DNA replication initiation complex once per cell cycle. Binds the DnaA box (a 9 base pair repeat at the origin) and separates the double-stranded (ds)DNA. Forms a right-handed helical filament on oriC DNA; dsDNA binds to the exterior of the filament while single-stranded (ss)DNA is stabiized in the filament's interior. The ATP-DnaA-oriC complex binds and stabilizes one strand of the AT-rich DNA unwinding element (DUE), permitting loading of DNA polymerase. After initiation quickly degrades to an ADP-DnaA complex that is not apt for DNA replication. Binds acidic phospholipids. The chain is Chromosomal replication initiator protein DnaA from Geobacter sulfurreducens (strain ATCC 51573 / DSM 12127 / PCA).